Reading from the N-terminus, the 362-residue chain is HMG box-containing protein C19G7.04 (362 aa).

In terms of domain architecture, SprT-like spans 135-299; sequence KCFLARLEDE…RLCKSQIKQI (165 aa). Positions 306–348 form a DNA-binding region, HMG box; it reads PNAFQIFLKENSKRLRKLHPHITHKELMKKLSDEYHRTKDAKQ.

Its subcellular location is the nucleus. It is found in the cytoplasm. The protein localises to the cytoskeleton. The protein resides in the spindle. The polypeptide is HMG box-containing protein C19G7.04 (Schizosaccharomyces pombe (strain 972 / ATCC 24843) (Fission yeast)).